Consider the following 509-residue polypeptide: Putative 6-phosphofructo-2-kinase/fructose-2,6-bisphosphatase YLR345W (509 aa).

The residue at position 6 (S6) is a Phosphoserine. A 6-phosphofructo-2-kinase region spans residues 6 to 291 (SDDEELLNGL…FFLMNLRQKK (286 aa)). 90 to 98 (GLPATSKTL) is an ATP binding site. D173 serves as the catalytic Proton donor/acceptor. 212-217 (NIALAL) contacts ATP. R237 is a binding site for beta-D-fructose 6-phosphate. The fructose-2,6-bisphosphatase stretch occupies residues 292–466 (GCVYFARCGT…IAHESTLRVL (175 aa)). R298 is a beta-D-fructose 2,6-bisphosphate binding site. Residue 415 to 418 (YKES) coordinates ATP. Positions 433 and 464 each coordinate beta-D-fructose 2,6-bisphosphate. 460-464 (ESTLR) contributes to the ATP binding site.

The protein in the C-terminal section; belongs to the phosphoglycerate mutase family. In terms of assembly, homodimer.

The protein localises to the cytoplasm. The enzyme catalyses beta-D-fructose 2,6-bisphosphate + H2O = beta-D-fructose 6-phosphate + phosphate. It catalyses the reaction beta-D-fructose 6-phosphate + ATP = beta-D-fructose 2,6-bisphosphate + ADP + H(+). Functionally, synthesis and degradation of fructose 2,6-bisphosphate. This chain is Putative 6-phosphofructo-2-kinase/fructose-2,6-bisphosphatase YLR345W, found in Saccharomyces cerevisiae (strain ATCC 204508 / S288c) (Baker's yeast).